The following is a 187-amino-acid chain: tRNA (cytidine(56)-2'-O)-methyltransferase (187 aa).

Residues leucine 94 and 120–124 each bind S-adenosyl-L-methionine; that span reads GAEKV.

Belongs to the aTrm56 family. In terms of assembly, homodimer.

Its subcellular location is the cytoplasm. The catalysed reaction is cytidine(56) in tRNA + S-adenosyl-L-methionine = 2'-O-methylcytidine(56) in tRNA + S-adenosyl-L-homocysteine + H(+). Its function is as follows. Specifically catalyzes the AdoMet-dependent 2'-O-ribose methylation of cytidine at position 56 in tRNAs. This Hyperthermus butylicus (strain DSM 5456 / JCM 9403 / PLM1-5) protein is tRNA (cytidine(56)-2'-O)-methyltransferase.